We begin with the raw amino-acid sequence, 154 residues long: Ribosome maturation factor RimP (154 aa).

It belongs to the RimP family.

The protein resides in the cytoplasm. Functionally, required for maturation of 30S ribosomal subunits. The chain is Ribosome maturation factor RimP from Prochlorococcus marinus (strain MIT 9313).